A 570-amino-acid polypeptide reads, in one-letter code: Cation/calcium exchanger 1 (570 aa).

13 consecutive transmembrane segments (helical) span residues 14 to 34 (LSLLINIFFIFLIFLHFASQT), 97 to 117 (SPVLGHLVLSAWLFVLFYLLG), 141 to 161 (MAGVTLLSLGNGAPDLFSSVV), 176 to 196 (ILGGAFFVSSFVVGTICVLIG), 212 to 232 (VFLLVALCCLGLIIFIGKVTI), 235 to 255 (ALCYLSIYLLYVGFLSVSHFF), 344 to 364 (CAVVSTAIAPVLLTELYCSHY), 371 to 391 (LILYIISGSIGLIVGILAYLT), 401 to 421 (FSLVWLLGGFTMSVTWTYMIA), 427 to 447 (LLISLGNIFGISPSVLGLTVL), 479 to 499 (YAGPLFNTVIGLGVPLVISSL), 513 to 533 (SLLETLGFLMVGLLWALVIMP), and 546 to 566 (GLLAIYLCFLSLRLARVFGVL).

Belongs to the Ca(2+):cation antiporter (CaCA) (TC 2.A.19) family. Cation/calcium exchanger (CCX) subfamily. As to expression, expressed in roots, leaves, stems and flowers.

The protein localises to the vacuole membrane. Its function is as follows. Vacuolar membrane-localized H(+)-dependent K(+) and Na(+) transporter. The chain is Cation/calcium exchanger 1 (CCX1) from Arabidopsis thaliana (Mouse-ear cress).